We begin with the raw amino-acid sequence, 484 residues long: ATP synthase subunit beta, chloroplastic (484 aa).

Position 163–170 (163–170 (GGAGVGKT)) interacts with ATP.

It belongs to the ATPase alpha/beta chains family. F-type ATPases have 2 components, CF(1) - the catalytic core - and CF(0) - the membrane proton channel. CF(1) has five subunits: alpha(3), beta(3), gamma(1), delta(1), epsilon(1). CF(0) has four main subunits: a(1), b(1), b'(1) and c(9-12).

It is found in the plastid. It localises to the chloroplast thylakoid membrane. The enzyme catalyses ATP + H2O + 4 H(+)(in) = ADP + phosphate + 5 H(+)(out). In terms of biological role, produces ATP from ADP in the presence of a proton gradient across the membrane. The catalytic sites are hosted primarily by the beta subunits. This Stigeoclonium helveticum (Green alga) protein is ATP synthase subunit beta, chloroplastic.